The sequence spans 254 residues: Germin-like protein 4-1 (254 aa).

Residues 1-27 (MASRAFAAVFAAVALVVCSSVLPRALA) form the signal peptide. An intrachain disulfide couples cysteine 37 to cysteine 52. Residues 67–220 (KALGVPGNTV…AFMIDKDQVD (154 aa)) enclose the Cupin type-1 domain. Positions 115, 117, 122, and 166 each coordinate Mn(2+).

The protein belongs to the germin family. In terms of assembly, oligomer (believed to be a pentamer but probably hexamer).

It is found in the secreted. Its subcellular location is the extracellular space. It localises to the apoplast. Its function is as follows. May play a role in plant defense. Probably has no oxalate oxidase activity even if the active site is conserved. The polypeptide is Germin-like protein 4-1 (Oryza sativa subsp. japonica (Rice)).